Consider the following 160-residue polypeptide: Cell division protein SepF (160 aa).

A compositionally biased stretch (acidic residues) spans 18–30; sequence AEGEDDFEDDVDT. A disordered region spans residues 18 to 72; sequence AEGEDDFEDDVDTGETSFDSDHSVTPMPSSSASASTPSAPREQSNPFQGGRVSRI. Over residues 45-57 the composition is skewed to low complexity; that stretch reads PSSSASASTPSAP.

Belongs to the SepF family. Homodimer. Interacts with FtsZ.

The protein localises to the cytoplasm. Cell division protein that is part of the divisome complex and is recruited early to the Z-ring. Probably stimulates Z-ring formation, perhaps through the cross-linking of FtsZ protofilaments. Its function overlaps with FtsA. This Bifidobacterium adolescentis (strain ATCC 15703 / DSM 20083 / NCTC 11814 / E194a) protein is Cell division protein SepF.